The following is a 194-amino-acid chain: ATP synthase subunit b 1 (194 aa).

A helical membrane pass occupies residues 1-21 (MLLGTVVTVLSTLPAIAYAMD).

Belongs to the ATPase B chain family. As to quaternary structure, F-type ATPases have 2 components, F(1) - the catalytic core - and F(0) - the membrane proton channel. F(1) has five subunits: alpha(3), beta(3), gamma(1), delta(1), epsilon(1). F(0) has three main subunits: a(1), b(2) and c(10-14). The alpha and beta chains form an alternating ring which encloses part of the gamma chain. F(1) is attached to F(0) by a central stalk formed by the gamma and epsilon chains, while a peripheral stalk is formed by the delta and b chains.

It localises to the cell inner membrane. Functionally, f(1)F(0) ATP synthase produces ATP from ADP in the presence of a proton or sodium gradient. F-type ATPases consist of two structural domains, F(1) containing the extramembraneous catalytic core and F(0) containing the membrane proton channel, linked together by a central stalk and a peripheral stalk. During catalysis, ATP synthesis in the catalytic domain of F(1) is coupled via a rotary mechanism of the central stalk subunits to proton translocation. Its function is as follows. Component of the F(0) channel, it forms part of the peripheral stalk, linking F(1) to F(0). In Granulibacter bethesdensis (strain ATCC BAA-1260 / CGDNIH1), this protein is ATP synthase subunit b 1.